A 352-amino-acid polypeptide reads, in one-letter code: Chorismate synthase (352 aa).

R48 lines the NADP(+) pocket. Residues 125 to 127, 237 to 238, G278, 293 to 297, and R319 each bind FMN; these read RSS, NA, and KPTSS.

It belongs to the chorismate synthase family. Homotetramer. The cofactor is FMNH2.

It carries out the reaction 5-O-(1-carboxyvinyl)-3-phosphoshikimate = chorismate + phosphate. It functions in the pathway metabolic intermediate biosynthesis; chorismate biosynthesis; chorismate from D-erythrose 4-phosphate and phosphoenolpyruvate: step 7/7. Functionally, catalyzes the anti-1,4-elimination of the C-3 phosphate and the C-6 proR hydrogen from 5-enolpyruvylshikimate-3-phosphate (EPSP) to yield chorismate, which is the branch point compound that serves as the starting substrate for the three terminal pathways of aromatic amino acid biosynthesis. This reaction introduces a second double bond into the aromatic ring system. This chain is Chorismate synthase, found in Francisella tularensis subsp. holarctica (strain FTNF002-00 / FTA).